Here is a 446-residue protein sequence, read N- to C-terminus: D(1A) dopamine receptor (446 aa).

The Extracellular portion of the chain corresponds to 1–23 (MRTLNTSTMDGTGLVVERDFSFR). Asn-5 is a glycosylation site (N-linked (GlcNAc...) asparagine). The chain crosses the membrane as a helical span at residues 24–49 (ILTACFLSLLILSTLLGNTLVCAAVI). Over 50-60 (RFRHLRSKVTN) the chain is Cytoplasmic. Residues 61 to 87 (FFVISLAVSDLLVAVLVMPWKAVAEIA) traverse the membrane as a helical segment. The Extracellular segment spans residues 88–96 (GFWPFGSFC). A disulfide bond links Cys-96 and Cys-186. Residues 97–119 (NIWVAFDIMCSTASILNLCVISV) form a helical membrane-spanning segment. Residues 120-138 (DRYWAISSPFRYERKMTPK) are Cytoplasmic-facing. A helical transmembrane segment spans residues 139–163 (AAFILISVAWTLSVLISFIPVQLSW). Residues 164–192 (HKAKPTSPSDGNVTSLGKTTHNCDSSLSR) lie on the Extracellular side of the membrane. The chain crosses the membrane as a helical span at residues 193–218 (TYAISSSLISFYIPVAIMIVTYTRIY). Residues 219–272 (RIAQKQIRRISALERAAVHAKNCQTTAGNGNPAECSQPESSFKMSFKRETKVLK) are Cytoplasmic-facing. The helical transmembrane segment at 273 to 299 (TLSVIMGVFVCCWLPFFILNCMVPFCG) threads the bilayer. The Extracellular segment spans residues 300–312 (SGETKPFCIDSIT). A helical transmembrane segment spans residues 313–337 (FDVFVWFGWANSSLNPIIYAFNADF). Topologically, residues 338 to 446 (RKAFSTLLGC…PITQNGQHPT (109 aa)) are cytoplasmic. 2 S-palmitoyl cysteine lipidation sites follow: Cys-347 and Cys-351.

The protein belongs to the G-protein coupled receptor 1 family. Interacts with DNAJC14 via its C-terminus. Interacts with DRD2. Interacts with DORIP1.

It is found in the cell membrane. The protein resides in the endoplasmic reticulum membrane. It localises to the cell projection. The protein localises to the cilium membrane. Its subcellular location is the dendrite. It is found in the dendritic spine. Dopamine receptor whose activity is mediated by G proteins which activate adenylyl cyclase. The sequence is that of D(1A) dopamine receptor (DRD1) from Sus scrofa (Pig).